A 115-amino-acid polypeptide reads, in one-letter code: Probable non-functional T cell receptor beta variable 7-3 (115 aa).

An N-terminal signal peptide occupies residues 1-21; that stretch reads MGTRLLCWAALCLLGADHTGA. The region spanning 22 to 115 is the Ig-like domain; the sequence is GVSQTPSNKV…SAAYLRASSL (94 aa).

Most probably, the alpha-beta TR is not assembled due to incorrect folding of the beta chain. Alpha-beta TR is a heterodimer composed of an alpha and beta chain; disulfide-linked. The alpha-beta TR is associated with the transmembrane signaling CD3 coreceptor proteins to form the TR-CD3 (TcR or TCR). The assembly of alpha-beta TR heterodimers with CD3 occurs in the endoplasmic reticulum where a single alpha-beta TR heterodimer associates with one CD3D-CD3E heterodimer, one CD3G-CD3E heterodimer and one CD247 homodimer forming a stable octameric structure. CD3D-CD3E and CD3G-CD3E heterodimers preferentially associate with TR alpha and TR beta chains, respectively. The association of the CD247 homodimer is the last step of TcR assembly in the endoplasmic reticulum and is required for transport to the cell surface.

It localises to the cell membrane. Functionally, probable non-functional open reading frame (ORF) of V region of the variable domain of T cell receptor (TR) beta chain. Non-functional ORF generally cannot participate in the synthesis of a productive T cell receptor (TR) chain due to altered V-(D)-J or switch recombination and/or splicing site (at mRNA level) and/or conserved amino acid change (protein level). Alpha-beta T cell receptors are antigen specific receptors which are essential to the immune response and are present on the cell surface of T lymphocytes. Recognize peptide-major histocompatibility (MH) (pMH) complexes that are displayed by antigen presenting cells (APC), a prerequisite for efficient T cell adaptive immunity against pathogens. Binding of alpha-beta TR to pMH complex initiates TR-CD3 clustering on the cell surface and intracellular activation of LCK that phosphorylates the ITAM motifs of CD3G, CD3D, CD3E and CD247 enabling the recruitment of ZAP70. In turn ZAP70 phosphorylates LAT, which recruits numerous signaling molecules to form the LAT signalosome. The LAT signalosome propagates signal branching to three major signaling pathways, the calcium, the mitogen-activated protein kinase (MAPK) kinase and the nuclear factor NF-kappa-B (NF-kB) pathways, leading to the mobilization of transcription factors that are critical for gene expression and essential for T cell growth and differentiation. The T cell repertoire is generated in the thymus, by V-(D)-J rearrangement. This repertoire is then shaped by intrathymic selection events to generate a peripheral T cell pool of self-MH restricted, non-autoaggressive T cells. Post-thymic interaction of alpha-beta TR with the pMH complexes shapes TR structural and functional avidity. The protein is Probable non-functional T cell receptor beta variable 7-3 of Homo sapiens (Human).